We begin with the raw amino-acid sequence, 136 residues long: Probable 5-hydroxyisourate hydrolase ZK697.8 (136 aa).

Residues 1–19 (MIKFLLFLAIAAATVISNA) form the signal peptide. Substrate is bound by residues histidine 31, arginine 69, and tyrosine 133.

This sequence belongs to the transthyretin family. 5-hydroxyisourate hydrolase subfamily. Homotetramer.

The enzyme catalyses 5-hydroxyisourate + H2O = 5-hydroxy-2-oxo-4-ureido-2,5-dihydro-1H-imidazole-5-carboxylate + H(+). Functionally, catalyzes the hydrolysis of 5-hydroxyisourate (HIU) to 2-oxo-4-hydroxy-4-carboxy-5-ureidoimidazoline (OHCU). This chain is Probable 5-hydroxyisourate hydrolase ZK697.8, found in Caenorhabditis elegans.